We begin with the raw amino-acid sequence, 35 residues long: Ranatuerin-2SPb (35 aa).

Residues cysteine 28 and cysteine 33 are joined by a disulfide bond.

In terms of tissue distribution, expressed by the skin glands.

It is found in the secreted. Functionally, antibacterial activity against Gram-positive bacterium S.aureus. Shows no detectable hemolytic activity towards human erythrocytes. The sequence is that of Ranatuerin-2SPb from Lithobates septentrionalis (Mink frog).